The sequence spans 102 residues: NADH-quinone oxidoreductase subunit K (102 aa).

Transmembrane regions (helical) follow at residues 5–25 (LGHF…GIFL), 31–51 (IVLL…FVAF), and 62–82 (IFVF…LALL).

The protein belongs to the complex I subunit 4L family. NDH-1 is composed of 14 different subunits. Subunits NuoA, H, J, K, L, M, N constitute the membrane sector of the complex.

The protein localises to the cell inner membrane. The enzyme catalyses a quinone + NADH + 5 H(+)(in) = a quinol + NAD(+) + 4 H(+)(out). NDH-1 shuttles electrons from NADH, via FMN and iron-sulfur (Fe-S) centers, to quinones in the respiratory chain. The immediate electron acceptor for the enzyme in this species is believed to be ubiquinone. Couples the redox reaction to proton translocation (for every two electrons transferred, four hydrogen ions are translocated across the cytoplasmic membrane), and thus conserves the redox energy in a proton gradient. This Variovorax paradoxus (strain S110) protein is NADH-quinone oxidoreductase subunit K.